A 741-amino-acid chain; its full sequence is Mitofusin-1 (741 aa).

The Cytoplasmic portion of the chain corresponds to 1–584 (MAETVSPLKH…AAQEELMITL (584 aa)). Residues 9–73 (KHFVLAKKAI…LAVIGEVLSR (65 aa)) are part of a helix bundle domain, formed by helices from N-terminal and C-terminal regions. The 250-residue stretch at 72-321 (SRRHMKVAFF…ARLQEFQNFE (250 aa)) folds into the Dynamin-type G domain. Residues 82 to 89 (GRTSSGKS) are G1 motif. A GTP-binding site is contributed by 85 to 90 (SSGKSS). Residues 108 to 109 (TT) are G2 motif. Residues 178–181 (DSPG) form a G3 motif region. Position 237–240 (237–240 (NRWD)) interacts with GTP. The G4 motif stretch occupies residues 237–240 (NRWD). Position 266 (Glu-266) is a region of interest, G5 motif. GTP-binding residues include Ser-284 and Lys-286. The tract at residues 338 to 364 (EQHTIRAKQILDTVKNILDSVNVAAAE) is part of a helix bundle domain, formed by helices from N-terminal and C-terminal regions. Positions 371–408 (EEREDQIDRLDFIRNQMNLLTLDVKKKIKEVTEEVANK) form a coiled coil. A helical transmembrane segment spans residues 585–605 (ITGLASLTSRTSMGIIVVGGV). Over 606 to 608 (IWK) the chain is Mitochondrial intermembrane. Residues 609 to 629 (TVGWKLISVTLSMYGALYLYE) traverse the membrane as a helical segment. Residues 630–741 (RLTWTTRAKE…QFLHPSSGES (112 aa)) lie on the Cytoplasmic side of the membrane. Positions 677–735 (FARLCQQVDVTQKHLEEEIARLSKEIDQLEKIQNNSKLLRNKAVQLESELENFSKQFLH) form a coiled coil. A part of a helix bundle domain, formed by helices from N-terminal and C-terminal regions region spans residues 703-734 (DQLEKIQNNSKLLRNKAVQLESELENFSKQFL).

The protein belongs to the TRAFAC class dynamin-like GTPase superfamily. Dynamin/Fzo/YdjA family. Mitofusin subfamily. Homodimer, also in the absence of bound GTP. Forms higher oligomers in the presence of a transition state GTP analog. Forms homomultimers and heteromultimers with MFN2. Oligomerization is essential for mitochondrion fusion. Component of a high molecular weight multiprotein complex. Interacts with VAT1. Interacts with THG1L; THG1L probably functions as a guanyl-nucleotide exchange factor/GEF, activating MFN1. Post-translationally, ubiquitinated by MARCHF5. When mitochondria are depolarized and dysfunctional, it is ubiquitinated by a SCF (SKP1-CUL1-F-box protein) E3 ubiquitin-protein ligase complex that contains FBXO7 and PRKN. Ubiquitinated by non-degradative ubiquitin by PRKN, promoting mitochondrial fusion; deubiquitination by USP30 inhibits mitochondrial fusion. Detected in adult heart. Detected in embryos (at protein level). Widely expressed.

Its subcellular location is the mitochondrion outer membrane. It carries out the reaction GTP + H2O = GDP + phosphate + H(+). Functionally, mitochondrial outer membrane GTPase that mediates mitochondrial clustering and fusion. Membrane clustering requires GTPase activity. It may involve a major rearrangement of the coiled coil domains. Mitochondria are highly dynamic organelles, and their morphology is determined by the equilibrium between mitochondrial fusion and fission events. Overexpression induces the formation of mitochondrial networks (in vitro). Has low GTPase activity. The chain is Mitofusin-1 (Mfn1) from Mus musculus (Mouse).